Here is a 302-residue protein sequence, read N- to C-terminus: Deoxyhypusine hydroxylase (302 aa).

HEAT-like PBS-type repeat units lie at residues 23–49 (ERFR…AFDD), 54–80 (LKHE…VLKD), 87–113 (VRHE…YKKD), 175–201 (DRYR…GLKD), 206–232 (FRHE…NLED), and 239–265 (VRHE…YADD). Positions 56, 57, 89, and 90 each coordinate Fe cation. Residues H208, E209, H241, and E242 each coordinate Fe cation.

Belongs to the deoxyhypusine hydroxylase family. The cofactor is Fe(2+).

Its subcellular location is the endoplasmic reticulum membrane. The enzyme catalyses [eIF5A protein]-deoxyhypusine + AH2 + O2 = [eIF5A protein]-hypusine + A + H2O. It participates in protein modification; eIF5A hypusination. Its function is as follows. Catalyzes the hydroxylation of the N(6)-(4-aminobutyl)-L-lysine intermediate to form hypusine, an essential post-translational modification only found in mature eIF-5A factor. Essential for organismal viability and plays a role in a wide number of important processes such as cell growth and proliferation, and regulates induction of autophagy and protein synthesis. Has a role in eIF-5A-mediated translational control. The protein is Deoxyhypusine hydroxylase of Drosophila pseudoobscura pseudoobscura (Fruit fly).